The chain runs to 478 residues: Noelin-3 (478 aa).

Residues 1-23 (MSAPLLKLGAVLSTMAMISNWMS) form the signal peptide. Residues N33, N95, N179, N299, and N465 are each glycosylated (N-linked (GlcNAc...) asparagine). Positions 77-217 (CSRDAKSRQL…TRLRDCMKKL (141 aa)) form a coiled coil. Residues 218-470 (TCGKLMKITG…QVLFNVTLFH (253 aa)) form the Olfactomedin-like domain. The cysteines at positions 219 and 401 are disulfide-linked.

As to quaternary structure, peripherally associated with AMPAR complex. AMPAR complex consists of an inner core made of 4 pore-forming GluA/GRIA proteins (GRIA1, GRIA2, GRIA3 and GRIA4) and 4 major auxiliary subunits arranged in a twofold symmetry. One of the two pairs of distinct binding sites is occupied either by CNIH2, CNIH3 or CACNG2, CACNG3. The other harbors CACNG2, CACNG3, CACNG4, CACNG8 or GSG1L. This inner core of AMPAR complex is complemented by outer core constituents binding directly to the GluA/GRIA proteins at sites distinct from the interaction sites of the inner core constituents. Outer core constituents include at least PRRT1, PRRT2, CKAMP44/SHISA9, FRRS1L and NRN1. The proteins of the inner and outer core serve as a platform for other, more peripherally associated AMPAR constituents, including OLFM3. Alone or in combination, these auxiliary subunits control the gating and pharmacology of the AMPAR complex and profoundly impact their biogenesis and protein processing. Homodimer. Interacts with MYOC. Interacts with OLFM2. As to expression, expressed in the brain (at protein level). Also expressed in the retina, mainly in the ganglion cell layer and in the amacrine cell subregion of the inner nuclear layer. Expressed at high levels in the epithelial cells of the posterior iris and the ciliary body and, at lower levels, in the trabecular meshwork. Isoform 2 preferentially expressed in retina and brain, while isoform 1 preferentially expressed in the tissues of the eye angle.

The protein resides in the secreted. It localises to the synapse. This Rattus norvegicus (Rat) protein is Noelin-3 (Olfm3).